Reading from the N-terminus, the 396-residue chain is MTEHNVRNFTINFGPEHPSAHGVLRLVLELDGEIVERVDPHIGLLHRGTEKLIETKTYLQAVPYFDRLDYVAPMNQEHAFALAVEKLLGLEIPMRGQLIRVLYSEIGRILSHIMNVTTQAMDVGAMTPPVWGFEEREKLMVFYERACGARMHSAYVRPGGVHQDLPPELVDDIGKWCDPFLTVLDNIEGLLTDNRIYKQRNVDIGVVSLEDAFAWGFTGVMVRGSGAAWDLRRSQPYECYSDLEFDIPVGKNGDCYDRYLIRMQEMRESVKIMKQCVDRLSGKHRIGPVSSLDGKVVPPKRGEMKRSMEALIHHFKLYTEGYHVPAGEVYAAVEAPKGEFGVYVVADGSNKPYRCKIRAPGYAHLQAMDFLCKGHQLADVTAVLGSLDIVFGEVDR.

Belongs to the complex I 49 kDa subunit family. In terms of assembly, NDH-1 is composed of 14 different subunits. Subunits NuoB, C, D, E, F, and G constitute the peripheral sector of the complex.

It localises to the cell inner membrane. It carries out the reaction a quinone + NADH + 5 H(+)(in) = a quinol + NAD(+) + 4 H(+)(out). Its function is as follows. NDH-1 shuttles electrons from NADH, via FMN and iron-sulfur (Fe-S) centers, to quinones in the respiratory chain. The immediate electron acceptor for the enzyme in this species is believed to be ubiquinone. Couples the redox reaction to proton translocation (for every two electrons transferred, four hydrogen ions are translocated across the cytoplasmic membrane), and thus conserves the redox energy in a proton gradient. The polypeptide is NADH-quinone oxidoreductase subunit D (Agrobacterium fabrum (strain C58 / ATCC 33970) (Agrobacterium tumefaciens (strain C58))).